Reading from the N-terminus, the 361-residue chain is Hsc70-interacting protein (361 aa).

A disordered region spans residues 39 to 98 (GGTIPPAPASTSTDETSKGKAEEQPEEPVKSPEPESEESDLEIDNEGVIEPDNDDPQEMG). A compositionally biased stretch (basic and acidic residues) spans 53–71 (ETSKGKAEEQPEEPVKSPE). Positions 72–98 (PESEESDLEIDNEGVIEPDNDDPQEMG) are enriched in acidic residues. 3 TPR repeats span residues 112–145 (ANEK…NPCL), 147–179 (ILYA…NPDS), and 181–213 (QTYK…DYDE). Over residues 254-270 (KAREEHERAQREEEARR) the composition is skewed to basic and acidic residues. The tract at residues 254–292 (KAREEHERAQREEEARRQAGGAQFGGFPGGFPGGFPGAM) is disordered. The span at 275–292 (AQFGGFPGGFPGGFPGAM) shows a compositional bias: gly residues. In terms of domain architecture, STI1 spans 311–350 (DPEVLAAMQDPEVMAAFQDVAQNPANMSKYQNNPKVMSLI).

This sequence belongs to the FAM10 family. Homotetramer. Interacts with HSC70 as well as DNAJ homologs and HSP90.

Its subcellular location is the cytoplasm. Functionally, one HIP oligomer binds the ATPase domains of at least two HSC70 molecules dependent on activation of the HSC70 ATPase by HSP40. Stabilizes the ADP state of HSC70 that has a high affinity for substrate protein. Through its own chaperone activity, it may contribute to the interaction of HSC70 with various target proteins. The protein is Hsc70-interacting protein (ST13) of Gallus gallus (Chicken).